The following is a 308-amino-acid chain: MAKEIVGGFKFDQRHGKERVQVARVWKTKQGWYFIVEWRVGNSLLSDCVNSYVRDDNSDIVATDTMKNTVYAKAKECSEILSVEDFAILLAKHFISFYKQVTAAIVNIVEKPWERVSVDGQPHEHGFKLGSERHTAEAIVQKSGALQLTSGIEGLSLLKTTKSGFEGFIRDKYTALPETHERMLATEVTALWRYSYESLYSIPQKPLYFTDKYLEVKKVLADNFFGPPNVGVYSPSVQNTLYLMAKAALNRFPEIASIQLKMPNIHFLPVNISNKDGPIVKFEADVYLPTDEPHGSIQASLRRLWSKL.

Catalysis depends on charge relay system residues lysine 17 and threonine 63. The urate site is built by threonine 63, aspartate 64, phenylalanine 165, arginine 182, valine 237, glutamine 238, and asparagine 264. Residue histidine 266 is the Charge relay system of the active site. The Microbody targeting signal signature appears at 306 to 308; it reads SKL.

It belongs to the uricase family.

It is found in the peroxisome. The catalysed reaction is urate + O2 + H2O = 5-hydroxyisourate + H2O2. Its pathway is purine metabolism; urate degradation; (S)-allantoin from urate: step 1/3. In terms of biological role, catalyzes the oxidation of uric acid to 5-hydroxyisourate, which is further processed to form (S)-allantoin. In Canavalia lineata (Beach bean), this protein is Uricase-2 isozyme 1.